A 118-amino-acid chain; its full sequence is uncharacterized protein (118 aa).

Residues 6–104 enclose the HTH hxlR-type domain; that stretch reads CGFEVTKEVI…WGGYYAEQEY (99 aa).

This is an uncharacterized protein from Bacillus subtilis (strain 168).